We begin with the raw amino-acid sequence, 640 residues long: Auxin efflux carrier component 3 (640 aa).

At 1–7 (MISWHDL) the chain is on the extracellular side. A helical membrane pass occupies residues 8–28 (YTVLTAVIPLYVAMILAYGSV). Residues 29–38 (RWWKIFSPDQ) lie on the Cytoplasmic side of the membrane. Residues 39–59 (CSGINRFVAIFAVPLLSFHFI) traverse the membrane as a helical segment. A (indol-3-yl)acetate-binding site is contributed by valine 51. Over 60-71 (STNNPYAMNLRF) the chain is Extracellular. The helical transmembrane segment at 72-92 (IAADTLQKIIMLSLLVLWANF) threads the bilayer. Residues 93–101 (TRSGSLEWS) are Cytoplasmic-facing. A helical transmembrane segment spans residues 102 to 122 (ITIFSLSTLPNTLVMGIPLLI). 2 residues coordinate (indol-3-yl)acetate: asparagine 112 and leucine 114. The Extracellular segment spans residues 123–131 (AMYGEYSGS). The chain crosses the membrane as a helical span at residues 132 to 152 (LMVQIVVLQCIIWYTLLLFLF). Tyrosine 145 serves as a coordination point for (indol-3-yl)acetate. Over 153–500 (EFRGAKMLIM…LIRNPNTYSS (348 aa)) the chain is Cytoplasmic. 3 positions are modified to phosphoserine: serine 226, serine 243, and serine 283. A disordered region spans residues 310-351 (APNPEFSSTTTSTANKSVNKNPKDVNTNQQTTLPTGGKSNSH). Over residues 314–348 (EFSSTTTSTANKSVNKNPKDVNTNQQTTLPTGGKS) the composition is skewed to polar residues. Threonine 322 bears the Phosphothreonine mark. Serine 366 bears the Phosphoserine mark. Disordered regions lie at residues 372–391 (AGLNVFGGAPDNDQGGRSDQ) and 404–471 (SHNG…SQRK). Positions 430–442 (GKEEEAERPKDAE) are enriched in basic and acidic residues. Over residues 449–460 (APNSTAALQSKT) the composition is skewed to polar residues. The chain crosses the membrane as a helical span at residues 501-521 (LIGLIWALVAFRWHVAMPKII). Residues 522 to 524 (QQS) lie on the Extracellular side of the membrane. A helical membrane pass occupies residues 525-545 (ISILSDAGLGMAMFSLGLFMA). The Cytoplasmic segment spans residues 546–559 (LQPKLIACGNSVAT). A helical membrane pass occupies residues 560 to 580 (FAMAVRFLTGPAVMAVAAIAI). Topologically, residues 581-585 (GLRGD) are extracellular. A helical membrane pass occupies residues 586-606 (LLRVAIVQAALPQGIVPFVFA). Residues isoleucine 600 and valine 601 each coordinate (indol-3-yl)acetate. Residues 607–619 (KEYNVHPAILSTG) lie on the Cytoplasmic side of the membrane. A helical transmembrane segment spans residues 620–640 (VIFGMLIALPITLVYYILLGL).

Belongs to the auxin efflux carrier (TC 2.A.69.1) family. In terms of assembly, homodimer. As to expression, predominantly expressed at the lateral side of shoot endodermis cells as well as root pericycle and columella cells.

The protein localises to the cell membrane. Its activity is regulated as follows. Auxin efflux carrier activity is competitively inhibited by naptalamate (N-1-naphthylphthalamic acid, NPA). Its function is as follows. Acts as a component of the auxin efflux carrier; this activity is enhanced when activated by PID-mediated phosphorylation. Seems to be involved in the lateral auxin transport system. Together with PIN4 and PIN7, involved in the connective auxin transport (CAT) that ensures communication across the shoot system, and modulates strigolactone-mediated shoot branching control. Binds auxins including indole-3-acetic acid (IAA). Coordinated polar localization of PIN3 is directly regulated by the vesicle trafficking process. In Arabidopsis thaliana (Mouse-ear cress), this protein is Auxin efflux carrier component 3.